Here is a 220-residue protein sequence, read N- to C-terminus: Iron-sulfur cluster repair protein YtfE (220 aa).

This sequence belongs to the RIC family. YtfE subfamily. In terms of assembly, homodimer.

The protein resides in the cytoplasm. Its function is as follows. Di-iron-containing protein involved in the repair of iron-sulfur clusters damaged by oxidative and nitrosative stress conditions. This is Iron-sulfur cluster repair protein YtfE from Salmonella choleraesuis (strain SC-B67).